The primary structure comprises 633 residues: MSKLLDTINSPSDLKKLSLDELRELAVQIREELVNRVTLNGGHLASSLGVVELTIALHRVFESPKDKIIWDVGHQSYAHKLLTGRREQFATLRQHGGLSGFTCRDESPHDPFGAGHASTSISAGLGMAVARDLAKEDYSVISVIGDGAISGGMSFEAINNAGHLHTKFIVILNDNGMAISPSTGALSKFLNNVRFDPRFEFAKRNAKQTITNMPFGKAVWAFTKSIKRKFEKSMLPGSLWEELGFIYLGPVDGHNIRELEAALKRAKDFESKPVLIHMITKKGKGYDDAEADAVKYHGISPKSGGLKSSHGLSYSQVFGQTLHKIMSQNPQVVAITAAMTDGCGLGEIAAAFPDRVFDVGICEQHAVTFAAGMATQGYIPVVVIYSTFLQRGFDQIIHDVCLQKLPVVFAIDRGGIVGDDGKTHQGIFDLSFMSLIPDMVVSAPSDENDLQHLLYTAVNSGKPFALRYPRGFGEGVEIESSLHNIPIGQNEILVNGSDVAILATGKSVAFAREALEILTESGIKPTLVNNRYISPLDSELVLKIAQSHKYLVTVEENVISGGLGSRINTLLAEAGLVNKIKIANIGIPDKFVEHGNQSLLRAKYGLDGKGIAQRVLSLVGNPNEMKHPQIICP.

Thiamine diphosphate-binding positions include histidine 74 and 115–117 (GHA). Mg(2+) is bound at residue aspartate 146. Residues 147-148 (GA), asparagine 175, tyrosine 286, and glutamate 363 each bind thiamine diphosphate. Residue asparagine 175 participates in Mg(2+) binding.

It belongs to the transketolase family. DXPS subfamily. Homodimer. It depends on Mg(2+) as a cofactor. Thiamine diphosphate serves as cofactor.

The catalysed reaction is D-glyceraldehyde 3-phosphate + pyruvate + H(+) = 1-deoxy-D-xylulose 5-phosphate + CO2. Its pathway is metabolic intermediate biosynthesis; 1-deoxy-D-xylulose 5-phosphate biosynthesis; 1-deoxy-D-xylulose 5-phosphate from D-glyceraldehyde 3-phosphate and pyruvate: step 1/1. Its function is as follows. Catalyzes the acyloin condensation reaction between C atoms 2 and 3 of pyruvate and glyceraldehyde 3-phosphate to yield 1-deoxy-D-xylulose-5-phosphate (DXP). The polypeptide is 1-deoxy-D-xylulose-5-phosphate synthase (Dehalococcoides mccartyi (strain ATCC BAA-2100 / JCM 16839 / KCTC 5957 / BAV1)).